The following is a 187-amino-acid chain: 2-oxoglutarate synthase subunit KorC (187 aa).

As to quaternary structure, heterotetramer of the KorA, KorB, KorC and KorD subunits.

The enzyme catalyses 2 oxidized [2Fe-2S]-[ferredoxin] + 2-oxoglutarate + CoA = succinyl-CoA + 2 reduced [2Fe-2S]-[ferredoxin] + CO2 + H(+). The sequence is that of 2-oxoglutarate synthase subunit KorC (korC) from Methanocaldococcus jannaschii (strain ATCC 43067 / DSM 2661 / JAL-1 / JCM 10045 / NBRC 100440) (Methanococcus jannaschii).